Reading from the N-terminus, the 255-residue chain is Ribonuclease HII (255 aa).

The RNase H type-2 domain occupies 70 to 255 (ELIAGVDEVG…FEPIKSIIKK (186 aa)). The a divalent metal cation site is built by Asp76, Glu77, and Asp168.

Belongs to the RNase HII family. It depends on Mn(2+) as a cofactor. Requires Mg(2+) as cofactor.

It is found in the cytoplasm. The enzyme catalyses Endonucleolytic cleavage to 5'-phosphomonoester.. Endonuclease that specifically degrades the RNA of RNA-DNA hybrids. The chain is Ribonuclease HII from Streptococcus thermophilus (strain ATCC BAA-491 / LMD-9).